A 218-amino-acid polypeptide reads, in one-letter code: Cytochrome b6 (218 aa).

Residues isoleucine 35 to phenylalanine 55 form a helical membrane-spanning segment. A heme c-binding site is contributed by cysteine 38. Residues histidine 89 and histidine 103 each contribute to the heme b site. 3 helical membrane passes run alanine 93–phenylalanine 113, leucine 119–tyrosine 139, and leucine 189–isoleucine 209. Heme b is bound by residues histidine 190 and histidine 205.

The protein belongs to the cytochrome b family. PetB subfamily. The 4 large subunits of the cytochrome b6-f complex are cytochrome b6, subunit IV (17 kDa polypeptide, PetD), cytochrome f and the Rieske protein, while the 4 small subunits are PetG, PetL, PetM and PetN. The complex functions as a dimer. Heme b is required as a cofactor. Requires heme c as cofactor.

The protein resides in the cellular thylakoid membrane. Its function is as follows. Component of the cytochrome b6-f complex, which mediates electron transfer between photosystem II (PSII) and photosystem I (PSI), cyclic electron flow around PSI, and state transitions. This chain is Cytochrome b6, found in Prochlorococcus marinus (strain MIT 9215).